Reading from the N-terminus, the 722-residue chain is Dual specificity tyrosine-phosphorylation-regulated kinase 2 (722 aa).

Serine 25 carries the phosphoserine modification. Positions 54 to 127 (TTTSLNGNGN…SGELKCNTPM (74 aa)) are disordered. Residues 66–119 (GNSNSNNNNNIGSPVSSSTTNSSNGGNERGSSTKSNSSSGSGSSGNSASSTGSG) show a composition bias toward low complexity. The Protein kinase domain maps to 198-494 (YEILEVIGKG…PDEAAHHEFL (297 aa)). ATP is bound by residues 204–212 (IGKGSFGQV) and lysine 227. Aspartate 324 acts as the Proton acceptor in catalysis. Tyrosine 356 and tyrosine 358 each carry phosphotyrosine; by autocatalysis. 4 disordered regions span residues 494 to 519 (LQPS…LNSV), 557 to 582 (TTKS…PDIK), 624 to 643 (GSGS…LPGT), and 679 to 722 (TTTH…FGRA). The span at 506–519 (RMSSSSSSSGLNSV) shows a compositional bias: low complexity. Over residues 557 to 576 (TTKSRQQPPSQSHGHAQSNG) the composition is skewed to polar residues. 2 stretches are compositionally biased toward low complexity: residues 626–635 (GSTHHVSSAA) and 689–707 (GQQQ…MSHS).

This sequence belongs to the protein kinase superfamily. CMGC Ser/Thr protein kinase family. MNB/DYRK subfamily. It depends on Mg(2+) as a cofactor. In terms of processing, phosphorylated on serine/threonine residues.

It localises to the cytoplasm. The catalysed reaction is L-seryl-[protein] + ATP = O-phospho-L-seryl-[protein] + ADP + H(+). The enzyme catalyses L-threonyl-[protein] + ATP = O-phospho-L-threonyl-[protein] + ADP + H(+). It catalyses the reaction L-tyrosyl-[protein] + ATP = O-phospho-L-tyrosyl-[protein] + ADP + H(+). Autophosphorylates on Tyr-356 and Tyr-358. Its function is as follows. In vitro; can phosphorylate exogenous substrates on Ser and Thr residues. May have a physiological role in development being involved in cellular growth and differentiation. In Drosophila melanogaster (Fruit fly), this protein is Dual specificity tyrosine-phosphorylation-regulated kinase 2.